We begin with the raw amino-acid sequence, 448 residues long: Divalent metal cation transporter MntH (448 aa).

11 consecutive transmembrane segments (helical) span residues 41-61 (LFAF…PGNW), 69-89 (SEFG…AVLL), 117-137 (GFVL…AEVI), 147-167 (FGIP…LVLF), 176-196 (IEVI…AEMV), 215-235 (IVTN…TVMP), 270-290 (FSLT…AAAF), 307-327 (LLNP…ALLA), 363-383 (VLAI…GINE), 384-404 (LLIF…IPLV), and 424-444 (IVSW…LFYT).

This sequence belongs to the NRAMP family.

The protein localises to the cell membrane. Functionally, h(+)-stimulated, divalent metal cation uptake system. The sequence is that of Divalent metal cation transporter MntH from Listeria innocua serovar 6a (strain ATCC BAA-680 / CLIP 11262).